Here is a 317-residue protein sequence, read N- to C-terminus: Anamorsin homolog (317 aa).

The segment at 1-192 (MREVLVVSES…ITGVRPNWKA (192 aa)) is N-terminal SAM-like domain. The linker stretch occupies residues 193–216 (KGDRKSSSIHAAPIDGYISKAPDY). [2Fe-2S] cluster contacts are provided by C219, C226, C229, and C231. A fe-S binding site A region spans residues 219 to 231 (CSTKPRACANCTC). [4Fe-4S] cluster is bound by residues C286, C289, C297, and C300. 2 consecutive short sequence motifs (cx2C motif) follow at residues 286–289 (CGNC) and 297–300 (CDSC). The interval 286-300 (CGNCYLGDAFRCDSC) is fe-S binding site B.

The protein belongs to the anamorsin family. Monomer. [2Fe-2S] cluster serves as cofactor. [4Fe-4S] cluster is required as a cofactor.

The protein localises to the cytoplasm. Its subcellular location is the mitochondrion intermembrane space. In terms of biological role, component of the cytosolic iron-sulfur (Fe-S) protein assembly (CIA) machinery. Required for the maturation of extramitochondrial Fe-S proteins. Part of an electron transfer chain functioning in an early step of cytosolic Fe-S biogenesis, facilitating the de novo assembly of a [4Fe-4S] cluster on the cytosolic Fe-S scaffold complex. Electrons are transferred from NADPH via a FAD- and FMN-containing diflavin oxidoreductase. Together with the diflavin oxidoreductase, also required for the assembly of the diferric tyrosyl radical cofactor of ribonucleotide reductase (RNR), probably by providing electrons for reduction during radical cofactor maturation in the catalytic small subunit. The chain is Anamorsin homolog from Theileria parva (East coast fever infection agent).